A 210-amino-acid chain; its full sequence is Fibroblast growth factor 21 (210 aa).

A signal peptide spans 1 to 28; it reads MEWMRSRVGTLGLWVRLLLAVFLLGVYQ. Residues 144-210 are disordered; it reads PLRLPQKDSP…LQGRSPSYAS (67 aa).

The protein belongs to the heparin-binding growth factors family. Interacts (via C-terminus) with KLB; this interaction is direct. Interacts with FGFR4. In terms of tissue distribution, most abundantly expressed in the liver, also expressed in the thymus at lower levels. Expressed in skeletal muscle (at protein level). Secreted in plasma (at protein level).

It is found in the secreted. Functionally, stimulates glucose uptake in differentiated adipocytes via the induction of glucose transporter SLC2A1/GLUT1 expression (but not SLC2A4/GLUT4 expression). Activity probably requires the presence of KLB. Regulates systemic glucose homeostasis and insulin sensitivity. The chain is Fibroblast growth factor 21 (Fgf21) from Mus musculus (Mouse).